We begin with the raw amino-acid sequence, 145 residues long: 3-dehydroquinate dehydratase (145 aa).

The active-site Proton acceptor is Y24. Positions 75, 81, and 88 each coordinate substrate. Residue H101 is the Proton donor of the active site. Residues 102–103 (LS) and R112 each bind substrate.

It belongs to the type-II 3-dehydroquinase family. As to quaternary structure, homododecamer.

It carries out the reaction 3-dehydroquinate = 3-dehydroshikimate + H2O. Its pathway is metabolic intermediate biosynthesis; chorismate biosynthesis; chorismate from D-erythrose 4-phosphate and phosphoenolpyruvate: step 3/7. Catalyzes a trans-dehydration via an enolate intermediate. In Phenylobacterium zucineum (strain HLK1), this protein is 3-dehydroquinate dehydratase.